The primary structure comprises 501 residues: MSKQVRVRFAPSPTGPLHIGGVRTALFNYLFAKKHNGVFYLRIEDTDQTRFVPGAEAYIMEALEWLGISPEETVGKNEKFGPYRQSDRKDLYQKYADQLINSGWAYYAFDTPEALDAHRKQHEAEGKTFIYNHHNREKLDTSLVISAEETAKRIANGEHYVIRFKTPVDETLHLKDIIRGDVKFETNLLDDKVLFKSDGMPTYHLANIVDDHLMETSHVIRGEEWLPSMPLHVLLYRAFGWDAPEFAHLPLILKPVGNGKLSKRDGDKLGFPVFPLEWKTEEGVSSGYREKGFFPEAVVNFLALLGWNDGTDKELFSLEELVEAFDLNRVHKAGAKFDPEKNKWFNHQYLIKQNDADLAKSFSTILEEKGFSTPLEVTTRIVSLIKERAHFVSEFWDLTDFFFQAPSSYDEKASKNWKEETPALMKELISVLENIEDFTSANIETIVKEWLTKNEIGMGKVMQPFRLSLVGALKGPHLFDIVEIIGKEETVSRIQKAISAL.

The 'HIGH' region signature appears at 11-21; sequence PSPTGPLHIGG. The short motif at 260–264 is the 'KMSKS' region element; it reads KLSKR. Position 263 (lysine 263) interacts with ATP.

The protein belongs to the class-I aminoacyl-tRNA synthetase family. Glutamate--tRNA ligase type 1 subfamily. Monomer.

It is found in the cytoplasm. It catalyses the reaction tRNA(Glu) + L-glutamate + ATP = L-glutamyl-tRNA(Glu) + AMP + diphosphate. Catalyzes the attachment of glutamate to tRNA(Glu) in a two-step reaction: glutamate is first activated by ATP to form Glu-AMP and then transferred to the acceptor end of tRNA(Glu). The polypeptide is Glutamate--tRNA ligase (Flavobacterium johnsoniae (strain ATCC 17061 / DSM 2064 / JCM 8514 / BCRC 14874 / CCUG 350202 / NBRC 14942 / NCIMB 11054 / UW101) (Cytophaga johnsonae)).